We begin with the raw amino-acid sequence, 203 residues long: N-(5'-phosphoribosyl)anthranilate isomerase (203 aa).

It belongs to the TrpF family.

It catalyses the reaction N-(5-phospho-beta-D-ribosyl)anthranilate = 1-(2-carboxyphenylamino)-1-deoxy-D-ribulose 5-phosphate. The protein operates within amino-acid biosynthesis; L-tryptophan biosynthesis; L-tryptophan from chorismate: step 3/5. In Thermoanaerobacter sp. (strain X514), this protein is N-(5'-phosphoribosyl)anthranilate isomerase.